The primary structure comprises 269 residues: Tryptophan synthase alpha chain (269 aa).

Active-site proton acceptor residues include Glu49 and Asp60.

This sequence belongs to the TrpA family. Tetramer of two alpha and two beta chains.

The catalysed reaction is (1S,2R)-1-C-(indol-3-yl)glycerol 3-phosphate + L-serine = D-glyceraldehyde 3-phosphate + L-tryptophan + H2O. It participates in amino-acid biosynthesis; L-tryptophan biosynthesis; L-tryptophan from chorismate: step 5/5. Its function is as follows. The alpha subunit is responsible for the aldol cleavage of indoleglycerol phosphate to indole and glyceraldehyde 3-phosphate. This Cronobacter sakazakii (strain ATCC BAA-894) (Enterobacter sakazakii) protein is Tryptophan synthase alpha chain.